The primary structure comprises 400 residues: Tyrosine--tRNA ligase (400 aa).

Positions 42-51 match the 'HIGH' region motif; the sequence is PTAPDLHLGH. The 'KMSKS' region motif lies at 226-230; the sequence is KMSKS. Lys229 serves as a coordination point for ATP. Residues 339 to 399 enclose the S4 RNA-binding domain; the sequence is FSISYILRRA…GKKKIAQIFV (61 aa).

The protein belongs to the class-I aminoacyl-tRNA synthetase family. TyrS type 2 subfamily. In terms of assembly, homodimer.

The protein resides in the cytoplasm. The enzyme catalyses tRNA(Tyr) + L-tyrosine + ATP = L-tyrosyl-tRNA(Tyr) + AMP + diphosphate + H(+). In terms of biological role, catalyzes the attachment of tyrosine to tRNA(Tyr) in a two-step reaction: tyrosine is first activated by ATP to form Tyr-AMP and then transferred to the acceptor end of tRNA(Tyr). In Hahella chejuensis (strain KCTC 2396), this protein is Tyrosine--tRNA ligase.